We begin with the raw amino-acid sequence, 214 residues long: Probable nicotinate-nucleotide adenylyltransferase (214 aa).

This sequence belongs to the NadD family.

The catalysed reaction is nicotinate beta-D-ribonucleotide + ATP + H(+) = deamido-NAD(+) + diphosphate. It participates in cofactor biosynthesis; NAD(+) biosynthesis; deamido-NAD(+) from nicotinate D-ribonucleotide: step 1/1. Its function is as follows. Catalyzes the reversible adenylation of nicotinate mononucleotide (NaMN) to nicotinic acid adenine dinucleotide (NaAD). The protein is Probable nicotinate-nucleotide adenylyltransferase of Pseudomonas paraeruginosa (strain DSM 24068 / PA7) (Pseudomonas aeruginosa (strain PA7)).